Consider the following 443-residue polypeptide: Thymidine phosphorylase (443 aa).

Belongs to the thymidine/pyrimidine-nucleoside phosphorylase family. In terms of assembly, homodimer.

It carries out the reaction thymidine + phosphate = 2-deoxy-alpha-D-ribose 1-phosphate + thymine. It functions in the pathway pyrimidine metabolism; dTMP biosynthesis via salvage pathway; dTMP from thymine: step 1/2. Functionally, the enzymes which catalyze the reversible phosphorolysis of pyrimidine nucleosides are involved in the degradation of these compounds and in their utilization as carbon and energy sources, or in the rescue of pyrimidine bases for nucleotide synthesis. The sequence is that of Thymidine phosphorylase from Shewanella piezotolerans (strain WP3 / JCM 13877).